Consider the following 234-residue polypeptide: Sugar fermentation stimulation protein homolog (234 aa).

This sequence belongs to the SfsA family.

The sequence is that of Sugar fermentation stimulation protein homolog from Citrobacter koseri (strain ATCC BAA-895 / CDC 4225-83 / SGSC4696).